A 425-amino-acid chain; its full sequence is UDP-N-acetylglucosamine 1-carboxyvinyltransferase (425 aa).

Phosphoenolpyruvate is bound at residue 25–26; it reads KN. Arg-95 contributes to the UDP-N-acetyl-alpha-D-glucosamine binding site. The active-site Proton donor is the Cys-119. A 2-(S-cysteinyl)pyruvic acid O-phosphothioketal modification is found at Cys-119. UDP-N-acetyl-alpha-D-glucosamine-binding positions include 124–128, Asp-306, and Ile-328; that span reads RPVDQ.

The protein belongs to the EPSP synthase family. MurA subfamily.

It is found in the cytoplasm. The catalysed reaction is phosphoenolpyruvate + UDP-N-acetyl-alpha-D-glucosamine = UDP-N-acetyl-3-O-(1-carboxyvinyl)-alpha-D-glucosamine + phosphate. The protein operates within cell wall biogenesis; peptidoglycan biosynthesis. Its function is as follows. Cell wall formation. Adds enolpyruvyl to UDP-N-acetylglucosamine. The protein is UDP-N-acetylglucosamine 1-carboxyvinyltransferase of Thermus thermophilus (strain ATCC 27634 / DSM 579 / HB8).